The sequence spans 396 residues: Ribosomal RNA large subunit methyltransferase I (396 aa).

The region spanning 2–81 (SVRLVLAKGR…ESIDIAFFSR (80 aa)) is the PUA domain.

It belongs to the methyltransferase superfamily. RlmI family.

The protein localises to the cytoplasm. The enzyme catalyses cytidine(1962) in 23S rRNA + S-adenosyl-L-methionine = 5-methylcytidine(1962) in 23S rRNA + S-adenosyl-L-homocysteine + H(+). In terms of biological role, specifically methylates the cytosine at position 1962 (m5C1962) of 23S rRNA. The sequence is that of Ribosomal RNA large subunit methyltransferase I from Shigella flexneri.